The following is a 179-amino-acid chain: Peptidyl-tRNA hydrolase (179 aa).

Position 15 (tyrosine 15) interacts with tRNA. The Proton acceptor role is filled by histidine 20. Positions 66, 68, and 114 each coordinate tRNA.

The protein belongs to the PTH family. In terms of assembly, monomer.

The protein localises to the cytoplasm. It catalyses the reaction an N-acyl-L-alpha-aminoacyl-tRNA + H2O = an N-acyl-L-amino acid + a tRNA + H(+). Its function is as follows. Hydrolyzes ribosome-free peptidyl-tRNAs (with 1 or more amino acids incorporated), which drop off the ribosome during protein synthesis, or as a result of ribosome stalling. Catalyzes the release of premature peptidyl moieties from peptidyl-tRNA molecules trapped in stalled 50S ribosomal subunits, and thus maintains levels of free tRNAs and 50S ribosomes. This is Peptidyl-tRNA hydrolase from Chlamydia trachomatis serovar L2 (strain ATCC VR-902B / DSM 19102 / 434/Bu).